The sequence spans 295 residues: Bifunctional protein FolD (295 aa).

NADP(+) contacts are provided by residues 172 to 174, Ser197, and Ile238; that span reads GRS.

Belongs to the tetrahydrofolate dehydrogenase/cyclohydrolase family. As to quaternary structure, homodimer.

It carries out the reaction (6R)-5,10-methylene-5,6,7,8-tetrahydrofolate + NADP(+) = (6R)-5,10-methenyltetrahydrofolate + NADPH. It catalyses the reaction (6R)-5,10-methenyltetrahydrofolate + H2O = (6R)-10-formyltetrahydrofolate + H(+). It participates in one-carbon metabolism; tetrahydrofolate interconversion. Its function is as follows. Catalyzes the oxidation of 5,10-methylenetetrahydrofolate to 5,10-methenyltetrahydrofolate and then the hydrolysis of 5,10-methenyltetrahydrofolate to 10-formyltetrahydrofolate. This is Bifunctional protein FolD from Rickettsia akari (strain Hartford).